The primary structure comprises 903 residues: Valine--tRNA ligase (903 aa).

Over residues 1–15 (MVCVTDQNNETTSQN) the composition is skewed to polar residues. The tract at residues 1–21 (MVCVTDQNNETTSQNRADKLP) is disordered. The 'HIGH' region signature appears at 61–71 (PNVTGQLHMGH). The short motif at 552-556 (KMSKS) is the 'KMSKS' region element. Lys-555 contributes to the ATP binding site. A coiled-coil region spans residues 836–903 (TVDVAAERKR…RINKRLEELA (68 aa)).

It belongs to the class-I aminoacyl-tRNA synthetase family. ValS type 1 subfamily. Monomer.

The protein localises to the cytoplasm. The catalysed reaction is tRNA(Val) + L-valine + ATP = L-valyl-tRNA(Val) + AMP + diphosphate. In terms of biological role, catalyzes the attachment of valine to tRNA(Val). As ValRS can inadvertently accommodate and process structurally similar amino acids such as threonine, to avoid such errors, it has a 'posttransfer' editing activity that hydrolyzes mischarged Thr-tRNA(Val) in a tRNA-dependent manner. The polypeptide is Valine--tRNA ligase (Corynebacterium glutamicum (strain ATCC 13032 / DSM 20300 / JCM 1318 / BCRC 11384 / CCUG 27702 / LMG 3730 / NBRC 12168 / NCIMB 10025 / NRRL B-2784 / 534)).